The following is a 424-amino-acid chain: tRNA(Met) cytidine acetate ligase (424 aa).

Residues 7–20 (ITEY…HLHH), glycine 102, asparagine 174, and arginine 199 each bind ATP.

Belongs to the TmcAL family.

It localises to the cytoplasm. It catalyses the reaction cytidine(34) in elongator tRNA(Met) + acetate + ATP = N(4)-acetylcytidine(34) in elongator tRNA(Met) + AMP + diphosphate. Catalyzes the formation of N(4)-acetylcytidine (ac(4)C) at the wobble position of elongator tRNA(Met), using acetate and ATP as substrates. First activates an acetate ion to form acetyladenylate (Ac-AMP) and then transfers the acetyl group to tRNA to form ac(4)C34. This Alkaliphilus metalliredigens (strain QYMF) protein is tRNA(Met) cytidine acetate ligase.